Reading from the N-terminus, the 403-residue chain is RNA-binding motif, single-stranded-interacting protein 1 (403 aa).

Residues 30-56 (PAHPMAPPSPSTTSSNNNSSSSSNSGW) form a disordered region. Over residues 40–54 (STTSSNNNSSSSSNS) the composition is skewed to low complexity. 2 RRM domains span residues 62-135 (TNLY…MAKQ) and 141-226 (TNLY…FADG). Threonine 208 is subject to Phosphothreonine.

It is found in the nucleus. Its function is as follows. Single-stranded DNA binding protein that interacts with the region upstream of the C-myc gene. Binds specifically to the DNA sequence motif 5'-[AT]CT[AT][AT]T-3'. Probably has a role in DNA replication. This Bos taurus (Bovine) protein is RNA-binding motif, single-stranded-interacting protein 1 (RBMS1).